A 157-amino-acid chain; its full sequence is Large ribosomal subunit protein uL15 (157 aa).

This sequence belongs to the universal ribosomal protein uL15 family. In terms of assembly, part of the 50S ribosomal subunit.

Its function is as follows. Binds to the 23S rRNA. This chain is Large ribosomal subunit protein uL15, found in Ehrlichia ruminantium (strain Welgevonden).